A 498-amino-acid polypeptide reads, in one-letter code: Putative F-box/FBD/LRR-repeat protein At4g03220 (498 aa).

The F-box domain maps to 23 to 71; sequence VDRISNLPDSLNHQILLLLPLKSAAQASLLSKRWRSLFLSLPDLDFTSI. 3 LRR repeats span residues 148–172, 175–200, and 235–259; these read SQNLRALTLKSANLGFRLPPSSSAR, FQKLTSLSLSRVILHNQPCLSDFFTD, and SLQLEGLEVSGNKLQKLKVESCFYS. One can recognise an FBD domain in the interval 416 to 466; the sequence is YWESQAYELESFLNHLEFVEIHGFVECENEMSLAIFLLRHGKALIKMTLRS.

The polypeptide is Putative F-box/FBD/LRR-repeat protein At4g03220 (Arabidopsis thaliana (Mouse-ear cress)).